Reading from the N-terminus, the 272-residue chain is tRNA pseudouridine synthase B (272 aa).

The Nucleophile role is filled by D38.

This sequence belongs to the pseudouridine synthase TruB family. Type 1 subfamily.

The enzyme catalyses uridine(55) in tRNA = pseudouridine(55) in tRNA. In terms of biological role, responsible for synthesis of pseudouridine from uracil-55 in the psi GC loop of transfer RNAs. In Campylobacter jejuni (strain RM1221), this protein is tRNA pseudouridine synthase B.